Here is a 513-residue protein sequence, read N- to C-terminus: ATP synthase subunit alpha (513 aa).

169–176 (GDRQTGKT) lines the ATP pocket.

Belongs to the ATPase alpha/beta chains family. F-type ATPases have 2 components, CF(1) - the catalytic core - and CF(0) - the membrane proton channel. CF(1) has five subunits: alpha(3), beta(3), gamma(1), delta(1), epsilon(1). CF(0) has three main subunits: a(1), b(2) and c(9-12). The alpha and beta chains form an alternating ring which encloses part of the gamma chain. CF(1) is attached to CF(0) by a central stalk formed by the gamma and epsilon chains, while a peripheral stalk is formed by the delta and b chains.

It is found in the cell inner membrane. The catalysed reaction is ATP + H2O + 4 H(+)(in) = ADP + phosphate + 5 H(+)(out). Produces ATP from ADP in the presence of a proton gradient across the membrane. The alpha chain is a regulatory subunit. This is ATP synthase subunit alpha from Histophilus somni (strain 2336) (Haemophilus somnus).